We begin with the raw amino-acid sequence, 241 residues long: 15,16-dihydrobiliverdin:ferredoxin oxidoreductase (241 aa).

It belongs to the HY2 family.

The enzyme catalyses 15,16-dihydrobiliverdin + oxidized 2[4Fe-4S]-[ferredoxin] = biliverdin IXalpha + reduced 2[4Fe-4S]-[ferredoxin] + 2 H(+). Its function is as follows. Catalyzes the two-electron reduction of biliverdin IX-alpha at the C15 methine bridge. The sequence is that of 15,16-dihydrobiliverdin:ferredoxin oxidoreductase (pebA) from Prochlorococcus marinus (strain SARG / CCMP1375 / SS120).